The chain runs to 1615 residues: Mediator of RNA polymerase II transcription subunit 23 (1615 aa).

Disordered regions lie at residues 40 to 67 (RQKP…DLPP) and 1230 to 1270 (SSSS…NASE). Over residues 41–51 (QKPDESLRDPP) the composition is skewed to basic and acidic residues. The span at 1230–1241 (SSSSNCSSRSGS) shows a compositional bias: low complexity.

It belongs to the Mediator complex subunit 23 family. As to quaternary structure, component of the Mediator complex.

Its subcellular location is the nucleus. Component of the Mediator complex, a coactivator involved in the regulated transcription of nearly all RNA polymerase II-dependent genes. Mediator functions as a bridge to convey information from gene-specific regulatory proteins to the basal RNA polymerase II transcription machinery. The Mediator complex, having a compact conformation in its free form, is recruited to promoters by direct interactions with regulatory proteins and serves for the assembly of a functional preinitiation complex with RNA polymerase II and the general transcription factors. The chain is Mediator of RNA polymerase II transcription subunit 23 (MED23) from Arabidopsis thaliana (Mouse-ear cress).